Here is a 95-residue protein sequence, read N- to C-terminus: Small ribosomal subunit protein bS20 (95 aa).

This sequence belongs to the bacterial ribosomal protein bS20 family.

Its function is as follows. Binds directly to 16S ribosomal RNA. The polypeptide is Small ribosomal subunit protein bS20 (Ehrlichia ruminantium (strain Gardel)).